We begin with the raw amino-acid sequence, 581 residues long: NADH-quinone oxidoreductase subunit C/D (581 aa).

The NADH dehydrogenase I subunit C stretch occupies residues 1-172 (MSATDLVSEL…PLFNMTAALF (172 aa)). The NADH dehydrogenase I subunit D stretch occupies residues 196–581 (ELMILNYGPH…IDYVMSDVDR (386 aa)).

The protein in the N-terminal section; belongs to the complex I 30 kDa subunit family. It in the C-terminal section; belongs to the complex I 49 kDa subunit family. In terms of assembly, NDH-1 is composed of 13 different subunits. Subunits NuoB, CD, E, F, and G constitute the peripheral sector of the complex.

It is found in the cell inner membrane. The catalysed reaction is a quinone + NADH + 5 H(+)(in) = a quinol + NAD(+) + 4 H(+)(out). NDH-1 shuttles electrons from NADH, via FMN and iron-sulfur (Fe-S) centers, to quinones in the respiratory chain. The immediate electron acceptor for the enzyme in this species is believed to be ubiquinone. Couples the redox reaction to proton translocation (for every two electrons transferred, four hydrogen ions are translocated across the cytoplasmic membrane), and thus conserves the redox energy in a proton gradient. The protein is NADH-quinone oxidoreductase subunit C/D of Rhodopseudomonas palustris (strain HaA2).